Here is a 322-residue protein sequence, read N- to C-terminus: MFEIHPVKKVSVVIPVYNEQESLPELIRRTTTACESLGKEYEILLIDDGSSDNSAHMLVEASQAENSHIVSILINRNYGQHSAIMAGFSHVTGDLIITLDADLQNPPEEIPRLVAKADEGYDVVGTVRQNRQDSWFRKTASKMINRLIQRTTGKAMGDYGCMLRAYRRHIVDAMLHCHERSTFIPILANIFARRAIEIPVHHAEREFGESKYSFMRLINLMYDLVTCLTTTPLRMLSLLGSIIAIGGFSIAVLLVILRLTFGPQWAAEGVFMLFAVLFTFIGAQFIGMGLLGEYIGRIYTDVRARPRYFVQQVIRPSSKENE.

At 1 to 235 (MFEIHPVKKV…TCLTTTPLRM (235 aa)) the chain is on the cytoplasmic side. Residues 236 to 256 (LSLLGSIIAIGGFSIAVLLVI) form a helical membrane-spanning segment. Residues 257-269 (LRLTFGPQWAAEG) lie on the Periplasmic side of the membrane. A helical transmembrane segment spans residues 270-290 (VFMLFAVLFTFIGAQFIGMGL). The Cytoplasmic segment spans residues 291–322 (LGEYIGRIYTDVRARPRYFVQQVIRPSSKENE).

It belongs to the glycosyltransferase 2 family.

It localises to the cell inner membrane. It carries out the reaction UDP-4-deoxy-4-formamido-beta-L-arabinose + di-trans,octa-cis-undecaprenyl phosphate = 4-deoxy-4-formamido-alpha-L-arabinopyranosyl di-trans,octa-cis-undecaprenyl phosphate + UDP. It functions in the pathway glycolipid biosynthesis; 4-amino-4-deoxy-alpha-L-arabinose undecaprenyl phosphate biosynthesis; 4-amino-4-deoxy-alpha-L-arabinose undecaprenyl phosphate from UDP-4-deoxy-4-formamido-beta-L-arabinose and undecaprenyl phosphate: step 1/2. The protein operates within bacterial outer membrane biogenesis; lipopolysaccharide biosynthesis. Its function is as follows. Catalyzes the transfer of 4-deoxy-4-formamido-L-arabinose from UDP to undecaprenyl phosphate. The modified arabinose is attached to lipid A and is required for resistance to polymyxin and cationic antimicrobial peptides. In Shigella flexneri, this protein is Undecaprenyl-phosphate 4-deoxy-4-formamido-L-arabinose transferase.